Consider the following 253-residue polypeptide: 7-carboxy-7-deazaguanine synthase (253 aa).

Residues 12 to 14 (WQG) and Arg32 contribute to the substrate site. A Radical SAM core domain is found at 23–253 (AFGRRQIFVR…FQVHKYLNVL (231 aa)). Residues Cys36, Cys40, and Cys43 each contribute to the [4Fe-4S] cluster site. Ser45 provides a ligand contact to Mg(2+). Thr98 lines the substrate pocket. An S-adenosyl-L-methionine-binding site is contributed by Gly100.

It belongs to the radical SAM superfamily. 7-carboxy-7-deazaguanine synthase family. As to quaternary structure, homodimer. [4Fe-4S] cluster serves as cofactor. Requires S-adenosyl-L-methionine as cofactor. The cofactor is Mg(2+).

It catalyses the reaction 6-carboxy-5,6,7,8-tetrahydropterin + H(+) = 7-carboxy-7-deazaguanine + NH4(+). It functions in the pathway purine metabolism; 7-cyano-7-deazaguanine biosynthesis. In terms of biological role, catalyzes the complex heterocyclic radical-mediated conversion of 6-carboxy-5,6,7,8-tetrahydropterin (CPH4) to 7-carboxy-7-deazaguanine (CDG), a step common to the biosynthetic pathways of all 7-deazapurine-containing compounds. This Thermococcus kodakarensis (strain ATCC BAA-918 / JCM 12380 / KOD1) (Pyrococcus kodakaraensis (strain KOD1)) protein is 7-carboxy-7-deazaguanine synthase.